A 226-amino-acid chain; its full sequence is MLTWLKRDDLSFPPLETALREPNGLLAAGGDLRPERLLAAYRHGCFPWYQEGQPLLWWSPDPRTVLFPDELHVSRSLRKRMRHGDYRVTFDKAFAEVIQGCAGPRSYADGTWITTPMQDAYVRLHEMGVAHSVEVWQQGQLVGGLYGLAMGELFFGESMFSRATDASKVGFVTLVERLREWGFALIDCQMPTRHLESFGARSIPRAAFAEALAMHLDRPSAADWRA.

This sequence belongs to the L/F-transferase family.

The protein localises to the cytoplasm. It catalyses the reaction N-terminal L-lysyl-[protein] + L-leucyl-tRNA(Leu) = N-terminal L-leucyl-L-lysyl-[protein] + tRNA(Leu) + H(+). The catalysed reaction is N-terminal L-arginyl-[protein] + L-leucyl-tRNA(Leu) = N-terminal L-leucyl-L-arginyl-[protein] + tRNA(Leu) + H(+). It carries out the reaction L-phenylalanyl-tRNA(Phe) + an N-terminal L-alpha-aminoacyl-[protein] = an N-terminal L-phenylalanyl-L-alpha-aminoacyl-[protein] + tRNA(Phe). Its function is as follows. Functions in the N-end rule pathway of protein degradation where it conjugates Leu, Phe and, less efficiently, Met from aminoacyl-tRNAs to the N-termini of proteins containing an N-terminal arginine or lysine. This is Leucyl/phenylalanyl-tRNA--protein transferase from Stutzerimonas stutzeri (strain A1501) (Pseudomonas stutzeri).